A 645-amino-acid polypeptide reads, in one-letter code: Alkyldihydroxyacetonephosphate synthase, peroxisomal (645 aa).

A compositionally biased stretch (low complexity) spans 1–10; the sequence is MAEAAAGEAG. The N-terminal 45 residues, 1–45, are a transit peptide targeting the peroxisome; the sequence is MAEAAAGEAGASERDPDAGRARRRLRVLSGHLLGRPQEAPSTNEC. Residues 1 to 72 form a disordered region; that stretch reads MAEAAAGEAG…AAPESGTIPK (72 aa). A compositionally biased stretch (basic and acidic residues) spans 11-20; it reads ASERDPDAGR. Low complexity predominate over residues 50 to 69; it reads AASAAGASPAATPAAPESGT. Phosphoserine occurs at positions 52 and 57. At threonine 61 the chain carries Phosphothreonine. Lysine 89 is modified (N6-acetyllysine). Residues 189–371 enclose the FAD-binding PCMH-type domain; that stretch reads FERIPDIVVW…TEATIKIRPT (183 aa). Residues 221–227, 290–296, and 303–306 each bind FAD; these read PIGGGTS, DSLEFST, and TRAS. Lysine 334 carries the N6-acetyllysine modification. Position 355 to 361 (355 to 361) interacts with FAD; that stretch reads EGTLGVI. Arginine 502 is a binding site for substrate. Residue tyrosine 565 is the Proton donor/acceptor of the active site. 2 important for enzyme activity regions span residues 602 to 604 and 641 to 645; these read HHH and NRNLL.

This sequence belongs to the FAD-binding oxidoreductase/transferase type 4 family. In terms of assembly, homodimer. The cofactor is FAD.

It localises to the peroxisome membrane. Its subcellular location is the peroxisome. It carries out the reaction a long chain fatty alcohol + a 1-acylglycerone 3-phosphate = a 1-O-alkylglycerone 3-phosphate + a long-chain fatty acid + H(+). The catalysed reaction is hexadecan-1-ol + 1-hexadecanoylglycerone 3-phosphate = 1-O-hexadecylglycerone 3-phosphate + hexadecanoate + H(+). It catalyses the reaction 1-hexadecanoylglycerone 3-phosphate + a long-chain fatty acid = a 1-acylglycerone 3-phosphate + hexadecanoate. The protein operates within glycerolipid metabolism; ether lipid biosynthesis. Functionally, catalyzes the exchange of the acyl chain in acyl-dihydroxyacetonephosphate (acyl-DHAP) for a long chain fatty alcohol, yielding the first ether linked intermediate, i.e. alkyl-dihydroxyacetonephosphate (alkyl-DHAP), in the pathway of ether lipid biosynthesis. This Mus musculus (Mouse) protein is Alkyldihydroxyacetonephosphate synthase, peroxisomal (Agps).